A 918-amino-acid chain; its full sequence is NEDD4-like E3 ubiquitin-protein ligase WWP1 (918 aa).

One can recognise a C2 domain in the interval 1-116 (MATASPRSDT…THNRKLEKVK (116 aa)). Polar residues-rich tracts occupy residues 150–164 (TNRS…QQNG), 209–219 (NGENTPSSPSQ), and 235–258 (SAPT…STMG). Disordered stretches follow at residues 150–182 (TNRS…PRLP) and 209–360 (NGEN…PHGR). Over residues 266–281 (TTSTSNCTSTTTQEPP) the composition is skewed to low complexity. WW domains are found at residues 345 to 378 (EALP…RPQP), 377 to 410 (QPLP…RPTM), 452 to 485 (GPLP…DPRT), and 492 to 525 (EPLP…DPRN). Positions 345–525 (EALPSGWEQR…RTTTFKDPRN (181 aa)) are interaction with ERBB4. The segment at 345–527 (EALPSGWEQR…TTFKDPRNGK (183 aa)) is required for interaction with and ubiquitination of AMOTL2. Required for interaction with YAP1. In terms of domain architecture, HECT spans 584 to 918 (KPYDLRRRLY…IEETEGFGQE (335 aa)). Cys-886 acts as the Glycyl thioester intermediate in catalysis.

In terms of assembly, interacts with the Crumbs complex components PALS1 and PATJ; interaction with the Crumbs complex is enhanced by WWP1's interaction with AMOTL2 and facilitates WWP1 localization to the plasma membrane. Interaction with the Crumbs complex promotes WWP1 monoubiquitination of AMOTL2, which activates the Hippo signaling pathway. Binds SCNN1A, SCNN1B, SCNN1G, WBP1, WBP2, DRPLA and adenovirus type 2 PIII. Interacts with TGIF. Binds KLF2 AND HIVEP3. Interacts with RNF11. Interacts with SPART. Interacts with NDFIP1 and NDFIP2; this interaction activates the E3 ubiquitin-protein ligase. Interacts with ERBB4 isoforms JM-B CYT-1 and JM-A CYT-1. Does not interact with ERB4 isoform JMA-A CYT-2. Interacts with SMAD1, SMAD2, SMAD3, SMAD5, SMAD6, SMAD7, TGFBR1 and TGFBR2. Associates with the TGFBR1:TGFBR2 receptor complex in presence of SMAD7. Interacts with SKIL isoform 1. Interacts with TP63 isoform 1 and isoform 2. Interacts (via WW domains) with ARRDC1, ARRDC2 and ARRDC3. In terms of processing, auto-ubiquitinated and ubiquitinated by RNF11.

It is found in the cytoplasm. The protein resides in the cell membrane. The protein localises to the nucleus. Its subcellular location is the cell junction. The catalysed reaction is S-ubiquitinyl-[E2 ubiquitin-conjugating enzyme]-L-cysteine + [acceptor protein]-L-lysine = [E2 ubiquitin-conjugating enzyme]-L-cysteine + N(6)-ubiquitinyl-[acceptor protein]-L-lysine.. Its pathway is protein modification; protein ubiquitination. Activated by NDFIP1- and NDFIP2-binding. E3 ubiquitin-protein ligase which accepts ubiquitin from an E2 ubiquitin-conjugating enzyme in the form of a thioester and then directly transfers the ubiquitin to targeted substrates. Ubiquitinates and promotes degradation of SMAD2 in response to TGF-beta signaling, which requires interaction with TGIF. Ubiquitinates ERBB4 isoforms JM-A CYT-1 and JM-B CYT-1, KLF2, KLF5 and TP63 and promotes their proteasomal degradation. Ubiquitinates RNF11 without targeting it for degradation. Ubiquitinates and promotes degradation of TGFBR1; the ubiquitination is enhanced by SMAD7. Ubiquitinates SMAD6 and SMAD7. Activates the Hippo signaling pathway in response to cell contact inhibition and recruitment to the Crumbs complex at the cell membrane. Monoubiquitinates AMOTL2 which facilitates its interaction with and activation of LATS2. LATS2 then phosphorylates YAP1, excluding it from the nucleus and therefore ultimately represses YAP1-driven transcription of target genes. The sequence is that of NEDD4-like E3 ubiquitin-protein ligase WWP1 (Wwp1) from Mus musculus (Mouse).